A 253-amino-acid chain; its full sequence is Adenosylcobinamide-GDP ribazoletransferase (253 aa).

The next 4 membrane-spanning stretches (helical) occupy residues I33 to L53, I106 to L126, F132 to I152, and V178 to F198.

The protein belongs to the CobS family. The cofactor is Mg(2+).

It localises to the cell membrane. The catalysed reaction is alpha-ribazole + adenosylcob(III)inamide-GDP = adenosylcob(III)alamin + GMP + H(+). It catalyses the reaction alpha-ribazole 5'-phosphate + adenosylcob(III)inamide-GDP = adenosylcob(III)alamin 5'-phosphate + GMP + H(+). Its pathway is cofactor biosynthesis; adenosylcobalamin biosynthesis; adenosylcobalamin from cob(II)yrinate a,c-diamide: step 7/7. Functionally, joins adenosylcobinamide-GDP and alpha-ribazole to generate adenosylcobalamin (Ado-cobalamin). Also synthesizes adenosylcobalamin 5'-phosphate from adenosylcobinamide-GDP and alpha-ribazole 5'-phosphate. This chain is Adenosylcobinamide-GDP ribazoletransferase, found in Saccharolobus islandicus (strain Y.G.57.14 / Yellowstone #1) (Sulfolobus islandicus).